We begin with the raw amino-acid sequence, 412 residues long: FAD-dependent monooxygenase nscC (412 aa).

The N-terminal stretch at 1–21 (MAKPQATVLIIGAGISGLTTS) is a signal peptide. FAD is bound by residues Glu35 and Ala46. An N-linked (GlcNAc...) asparagine glycan is attached at Asn92. Arg119 contacts FAD. N-linked (GlcNAc...) asparagine glycosylation is found at Asn170 and Asn231. Asp326 and Gly339 together coordinate FAD.

It belongs to the paxM FAD-dependent monooxygenase family. The cofactor is FAD.

The protein operates within secondary metabolite biosynthesis. Its function is as follows. FAD-dependent monooxygenase; part of the gene cluster that mediates the biosynthesis of neosartoricin B, a prenylated anthracenone that probably exhibits T-cell antiproliferative activity, suggestive of a physiological role as an immunosuppressive agent. The non-reducing polyketide synthase nscA probably synthesizes and cyclizes the decaketide backbone. The hydrolase nscB then mediates the product release through hydrolysis followed by spontaneous decarboxylation. The prenyltransferase nscD catalyzes the addition of the dimethylallyl group to the aromatic C5. The FAD-dependent monooxygenase nscC is then responsible for the stereospecific hydroxylation at C2. Neosartoricin B can be converted into two additional compounds neosartoricins C and D. Neosartoricin C is a spirocyclic compound that is cyclized through the attack of C3 hydroxyl on C14, followed by dehydration. On the other hand, neosartoricin D is a further cyclized compound in which attack of C2 on C14 in neosartoricin C results in the formation of the acetal-containing dioxabicyclo-octanone ring. Both of these compounds are novel and possibly represent related metabolites of the gene cluster. This is FAD-dependent monooxygenase nscC from Arthroderma otae (strain ATCC MYA-4605 / CBS 113480) (Microsporum canis).